The sequence spans 114 residues: Neurotrophic factor BDNF precursor form (114 aa).

Cystine bridges form between C14-C81, C59-C110, and C69-C112.

The protein belongs to the NGF-beta family.

The protein localises to the secreted. In terms of biological role, promotes the survival of neuronal populations that are all located either in the central nervous system or directly connected to it. The protein is Neurotrophic factor BDNF precursor form (bdnf) of Xenopus laevis (African clawed frog).